Here is a 47-residue protein sequence, read N- to C-terminus: MRKIPLNCEACGNRNYNVPKQEGSATRLTLKKYCPKCNAHTIHKESK.

This sequence belongs to the bacterial ribosomal protein bL33 family.

This is Large ribosomal subunit protein bL33A from Staphylococcus aureus (strain JH1).